Here is a 726-residue protein sequence, read N- to C-terminus: Catalase-peroxidase (726 aa).

The interval 1 to 33 (MSTSDDIHNTTATGKCPFHQGGHDQSAGAGTTT) is disordered. The tryptophyl-tyrosyl-methioninium (Trp-Tyr) (with M-252) cross-link spans 105–226 (WHGAGTYRSI…LGATEMGLIY (122 aa)). His-106 acts as the Proton acceptor in catalysis. Positions 226-252 (YVNPEGPDHSGEPLSAAAAIRATFGNM) form a cross-link, tryptophyl-tyrosyl-methioninium (Tyr-Met) (with W-105). His-267 lines the heme b pocket.

This sequence belongs to the peroxidase family. Peroxidase/catalase subfamily. Homodimer or homotetramer. The cofactor is heme b. Formation of the three residue Trp-Tyr-Met cross-link is important for the catalase, but not the peroxidase activity of the enzyme.

It carries out the reaction H2O2 + AH2 = A + 2 H2O. The enzyme catalyses 2 H2O2 = O2 + 2 H2O. Bifunctional enzyme with both catalase and broad-spectrum peroxidase activity. This Shigella sonnei (strain Ss046) protein is Catalase-peroxidase.